The primary structure comprises 95 residues: Citrate lyase acyl carrier protein (95 aa).

S14 is subject to O-(phosphoribosyl dephospho-coenzyme A)serine.

Belongs to the CitD family. In terms of assembly, oligomer with a subunit composition of (alpha,beta,gamma)6.

The protein resides in the cytoplasm. In terms of biological role, covalent carrier of the coenzyme of citrate lyase. This Haemophilus influenzae (strain 86-028NP) protein is Citrate lyase acyl carrier protein.